We begin with the raw amino-acid sequence, 855 residues long: Transcription factor gaf1 (855 aa).

Residues 72–112 (KNLTPNGDSNTLTPDTFSDPTAPSSAQSVPPTSSAETTADN) show a composition bias toward polar residues. Disordered regions lie at residues 72–126 (KNLT…PAYS), 149–184 (TSFD…ESQP), 229–287 (SHNL…GFPS), 412–483 (PNSN…DMFS), 602–643 (NKNA…TRTT), and 680–768 (KKRN…SQSM). The segment covering 149–168 (TSFDESTAKSKKRSIADSHF) has biased composition (basic and acidic residues). Ser-150 carries the post-translational modification Phosphoserine. Composition is skewed to low complexity over residues 240 to 250 (PANSNNSASPN) and 428 to 444 (NSSK…DSNQ). A compositionally biased stretch (polar residues) spans 445 to 476 (ENAESFNPSISSHNSAEWASGETTGHSSNSPL). A compositionally biased stretch (basic and acidic residues) spans 614-623 (AEDKKGDANT). 2 stretches are compositionally biased toward low complexity: residues 625 to 643 (RANA…TRTT) and 707 to 717 (SKSSSAKSTAA). Residues 635–659 (CTNCQTRTTPLWRRSPDGQPLCNAC) form a GATA-type zinc finger. Residues Ser-727 and Ser-729 each carry the phosphoserine modification. Low complexity predominate over residues 755–767 (QQQSSENESKSQS).

The protein resides in the nucleus. Transcriptional activator. This chain is Transcription factor gaf1 (gaf1), found in Schizosaccharomyces pombe (strain 972 / ATCC 24843) (Fission yeast).